Consider the following 308-residue polypeptide: MARAMDNAILETILQRVRPLIGQGKVADYIPALASVEGSKLGIAICTVDGQHYQAGDAHERFSIQSISKVLSLVVAMRHYPEEEIWQRVGKDPSGSPFNSLVQLEMEQGIPRNPFINAGALVVCDMLQGRLSAPRQRMLEVVRALCGVSDITYDVTVARSEFEHSARNAAIAWLMKSFGNFHHDVPTVLQNYFHYCALKMSCMELARTFVFLANQGEAFHLDEPVVTPMQARQINALMATSGMYQNAGEFAWRVGLPAKSGVGGGIVAIVPHEMAIAVWSPELDPAGNSLAGIAALEQLTQTLGRSVY.

Ser-66, Asn-117, Glu-161, Asn-168, Tyr-192, Tyr-244, and Val-262 together coordinate substrate.

Belongs to the glutaminase family. As to quaternary structure, homotetramer.

The enzyme catalyses L-glutamine + H2O = L-glutamate + NH4(+). In Salmonella agona (strain SL483), this protein is Glutaminase.